The sequence spans 425 residues: Proteinase-activated receptor 1 (425 aa).

The signal sequence occupies residues 1-21 (MGPRRLLLVAACFSLCGPLLS). The propeptide occupies 22–41 (ARTRARRPESKATNATLDPR). N-linked (GlcNAc...) asparagine glycosylation is found at Asn35, Asn62, and Asn75. Residues 42–102 (SFLLRNPNDK…SGYLTSSWLT (61 aa)) are Extracellular-facing. A helical transmembrane segment spans residues 103–128 (LFVPSVYTGVFVVSLPLNIMAIVVFI). At 129–137 (LKMKVKKPA) the chain is on the cytoplasmic side. A helical transmembrane segment spans residues 138 to 157 (VVYMLHLATADVLFVSVLPF). Residues 158 to 176 (KISYYFSGSDWQFGSELCR) lie on the Extracellular side of the membrane. Cys175 and Cys254 are joined by a disulfide. Residues 177-198 (FVTAAFYCNMYASILLMTVISI) form a helical membrane-spanning segment. At 199–218 (DRFLAVVYPMQSLSWRTLGR) the chain is on the cytoplasmic side. A helical membrane pass occupies residues 219–239 (ASFTCLAIWALAIAGVVPLLL). Residues 240–268 (KEQTIQVPGLNITTCHDVLNETLLEGYYA) lie on the Extracellular side of the membrane. 2 N-linked (GlcNAc...) asparagine glycosylation sites follow: Asn250 and Asn259. The helical transmembrane segment at 269–288 (YYFSAFSAVFFFVPLIISTV) threads the bilayer. Residues 289 to 311 (CYVSIIRCLSSSAVANRSKKSRA) are Cytoplasmic-facing. A helical membrane pass occupies residues 312–334 (LFLSAAVFCIFIICFGPTNVLLI). The Extracellular portion of the chain corresponds to 335-350 (AHYSFLSHTSTTEAAY). Residues 351 to 374 (FAYLLCVCVSSISCCIDPLIYYYA) form a helical membrane-spanning segment. Residues 375 to 425 (SSECQRYVYSILCCKESSDPSSYNSSGQLMASKMDTCSSNLNNSIYKKLLT) lie on the Cytoplasmic side of the membrane. Ser418 is subject to Phosphoserine.

The protein belongs to the G-protein coupled receptor 1 family. In terms of processing, proteolytic cleavage by thrombin generates a new N-terminus that functions as a tethered ligand. Also proteolytically cleaved by cathepsin CTSG. Cleavage at 41-Arg-|-Ser-42 by CTSG results in receptor activation while cleavage at 55-Phe-|-Trp-56 results in inhibition of receptor activation. Phosphorylated in the C-terminal tail; probably mediating desensitization prior to the uncoupling and internalization of the receptor. Platelets and vascular endothelial cells.

Its subcellular location is the cell membrane. Functionally, high affinity receptor that binds the activated thrombin, leading to calcium release from intracellular stores. The thrombin-activated receptor signaling pathway is mediated through PTX-insensitive G proteins, activation of phospholipase C resulting in the production of 1D-myo-inositol 1,4,5-trisphosphate (InsP3) which binds to InsP3 receptors causing calcium release from the stores. In astrocytes, the calcium released into the cytosol allows the Ca(2+)-dependent release of L-glutamate into the synaptic cleft through BEST1, that targets the neuronal postsynaptic GRIN2A/NMDAR receptor resulting in the synaptic plasticity regulation. May play a role in platelets activation and in vascular development. Mediates up-regulation of pro-inflammatory cytokines, such as MCP-1/CCL2 and IL6, triggered by coagulation factor Xa (F10) in cardiac fibroblasts and umbilical vein endothelial cells. The protein is Proteinase-activated receptor 1 of Homo sapiens (Human).